The following is a 90-amino-acid chain: Small ribosomal subunit protein uS17 (90 aa).

This sequence belongs to the universal ribosomal protein uS17 family. As to quaternary structure, part of the 30S ribosomal subunit.

Functionally, one of the primary rRNA binding proteins, it binds specifically to the 5'-end of 16S ribosomal RNA. This is Small ribosomal subunit protein uS17 from Gluconobacter oxydans (strain 621H) (Gluconobacter suboxydans).